Reading from the N-terminus, the 218-residue chain is N-(5'-phosphoribosyl)anthranilate isomerase (218 aa).

The protein belongs to the TrpF family.

The enzyme catalyses N-(5-phospho-beta-D-ribosyl)anthranilate = 1-(2-carboxyphenylamino)-1-deoxy-D-ribulose 5-phosphate. The protein operates within amino-acid biosynthesis; L-tryptophan biosynthesis; L-tryptophan from chorismate: step 3/5. The polypeptide is N-(5'-phosphoribosyl)anthranilate isomerase (Rhodopseudomonas palustris (strain BisB5)).